The following is a 2566-amino-acid chain: Zinc finger protein GLI1 (2566 aa).

3 disordered regions span residues 349–375, 430–508, and 985–1046; these read HHSS…SQSS, DIRR…RSTG, and KSIE…GDPD. 2 stretches are compositionally biased toward polar residues: residues 434–444 and 457–492; these read TLSSNGNSSHT and WSPN…YQQH. The segment covering 493–508 has biased composition (low complexity); the sequence is SGYTSTSGSSGNRSTG. Residues 993–1016 show a composition bias toward polar residues; the sequence is WQNQNVFSSRRNSTRDPSNNNNSG. The segment covering 1023–1035 has biased composition (acidic residues); sequence DEPDVDDDEELDD. Residues 1088-1110 form a C2H2-type 1; degenerate zinc finger; the sequence is RECVRGTRPFKAQYMLVVHMRRH. 3 C2H2-type zinc fingers span residues 1116 to 1140, 1146 to 1171, and 1177 to 1202; these read HKCI…LRSH, YQCE…NRTH, and YTCK…KTVH. 5 disordered regions span residues 1254–1313, 1465–1491, 1650–1677, 1727–1791, and 2067–2091; these read GNSN…PRDS, LSTT…TKQK, SKNM…NQNE, AAAS…MDND, and MHFS…NRPH. 2 stretches are compositionally biased toward low complexity: residues 1661–1677 and 1727–1743; these read NNNE…NQNE and AAAS…TTAS. Residues 1752-1769 show a composition bias toward basic residues; that stretch reads NHHHQKQQPKHSHQHQNR. Polar residues predominate over residues 1770–1791; the sequence is TKSINSDNNYSNQDNVSTMDND. A compositionally biased stretch (low complexity) spans 2070-2090; sequence SPHSYVHSSSSNSSPFNSNRP.

This sequence belongs to the GLI C2H2-type zinc-finger protein family. As to expression, expressed in female-paired or unpaired males along the ventral surface in neurons and skin tegument cells. In virgin and mature females, expressed bilaterally along the edges of the body in neurons. In mature females, also expressed in skin tegument cells.

The protein resides in the nucleus. In terms of biological role, probable transcription factor which plays an essential role in males to trigger female sexual development by inducing NRPS expression in male. NRPS produces the pheromone beta-alanyl-tryptamine (BATT), which stimulates female sexual development. This Schistosoma mansoni (Blood fluke) protein is Zinc finger protein GLI1.